A 51-amino-acid polypeptide reads, in one-letter code: Large ribosomal subunit protein eL39x (51 aa).

This sequence belongs to the eukaryotic ribosomal protein eL39 family.

In Oryza sativa subsp. japonica (Rice), this protein is Large ribosomal subunit protein eL39x (RPL39C).